A 245-amino-acid polypeptide reads, in one-letter code: DNA repair protein RecO (245 aa).

It belongs to the RecO family.

Its function is as follows. Involved in DNA repair and RecF pathway recombination. The polypeptide is DNA repair protein RecO (Bartonella bacilliformis (strain ATCC 35685 / KC583 / Herrer 020/F12,63)).